The sequence spans 226 residues: X-linked lymphocyte-regulated protein 3C (226 aa).

The segment at 1–66 is disordered; that stretch reads MSSRKRKATD…QARKEKQDLV (66 aa). Positions 8–18 are enriched in basic and acidic residues; that stretch reads ATDTAGRHSRM. The span at 21-30 shows a compositional bias: polar residues; the sequence is NLSSDDSQNP. 2 stretches are compositionally biased toward basic and acidic residues: residues 39 to 48 and 56 to 66; these read EVLDAGREDI and QQARKEKQDLV. Residues 155 to 210 adopt a coiled-coil conformation; that stretch reads ESLTLQKNRMEEFKSLCEKYLEKLEVLRDSRGNSIAEELRRLIATLEIKLLMLHNQ.

The protein belongs to the XLR/SYCP3 family. In terms of tissue distribution, expressed in lymphoid cells.

The sequence is that of X-linked lymphocyte-regulated protein 3C (Xlr3c) from Mus musculus (Mouse).